A 578-amino-acid chain; its full sequence is Acyl-coenzyme A synthetase ACSM5, mitochondrial (578 aa).

The transit peptide at 1–22 directs the protein to the mitochondrion; it reads MRLWLRGLVYQARRSSWGVFRI. Residue Lys96 is modified to N6-acetyllysine; alternate. Lys96 is subject to N6-succinyllysine; alternate. At Lys151 the chain carries N6-acetyllysine. An ATP-binding site is contributed by 229-237; sequence TSGTTGTPK. The residue at position 335 (Lys335) is an N6-acetyllysine. Residues 367-372, Asp454, Arg469, and Lys565 contribute to the ATP site; that span reads EGYGQS.

The protein belongs to the ATP-dependent AMP-binding enzyme family. Mg(2+) serves as cofactor. The cofactor is Mn(2+).

The protein resides in the mitochondrion matrix. It catalyses the reaction a medium-chain fatty acid + ATP + CoA = a medium-chain fatty acyl-CoA + AMP + diphosphate. Its function is as follows. Catalyzes the activation of fatty acids by CoA to produce an acyl-CoA, the first step in fatty acid metabolism. This is Acyl-coenzyme A synthetase ACSM5, mitochondrial (Acsm5) from Rattus norvegicus (Rat).